A 1108-amino-acid polypeptide reads, in one-letter code: Folliculin-interacting protein 2 (1108 aa).

The region spanning 38-456 is the uDENN FNIP1/2-type domain; the sequence is FGLSDIRLLV…TVMPVDHPPI (419 aa). 4 disordered regions span residues 89 to 112, 209 to 233, 598 to 635, and 649 to 671; these read QESS…GGSL, RTGS…DRDS, SEGV…AEPD, and QNDQ…PRVR. Residues 91-106 show a composition bias toward low complexity; that stretch reads SSSSSGSSSSGSSSSH. S212 and S217 each carry phosphoserine. Positions 464–1034 constitute a cDENN FNIP1/2-type domain; sequence TSQSVNMLAK…VSSLLQSILQ (571 aa). The tract at residues 540 to 905 is interaction with PRKAA1; that stretch reads DDQVINGSKI…DEACVLALLE (366 aa). A compositionally biased stretch (basic and acidic residues) spans 606 to 620; sequence LGHKPEKNRCKRPEQ. The span at 652 to 663 shows a compositional bias: polar residues; it reads QEATQDCSSSPP. Phosphoserine is present on residues S720, S721, and S723. The region spanning 1044–1099 is the dDENN FNIP1/2-type domain; sequence FCIMHLEDRLQEMYLKSKMLSEYLRGHTRVHVKELSVVLGIESNDLPLLTAIASTH.

It belongs to the FNIP family. Homodimer and homomultimer. Heterodimer and heteromultimer with FNIP1. Interacts (via C-terminus) with FLCN (via C-terminus). Phosphorylated FLCN is preferentially bound. Component of the lysosomal folliculin complex (LFC), composed of FLCN, FNIP1 (or FNIP2), RagA/RRAGA or RagB/RRAGB GDP-bound, RagC/RRAGC or RagD/RRAGD GTP-bound, and Ragulator. Interacts with PRKAA1, PRKAB1 and PRKAG1 subunits of 5'-AMP-activated protein kinase. Interacts with HSP70, HSP90AA1, STIP1, PTGES3, CDC37, BRAF, GCR and CDK4. Phosphorylated by AMPK.

The protein localises to the lysosome membrane. The protein resides in the cytoplasm. Binding partner of the GTPase-activating protein FLCN: involved in the cellular response to amino acid availability by regulating the non-canonical mTORC1 signaling cascade controlling the MiT/TFE factors TFEB and TFE3. Required to promote FLCN recruitment to lysosomes and interaction with Rag GTPases, leading to activation of the non-canonical mTORC1 signaling. In low-amino acid conditions, component of the lysosomal folliculin complex (LFC) on the membrane of lysosomes, which inhibits the GTPase-activating activity of FLCN, thereby inactivating mTORC1 and promoting nuclear translocation of TFEB and TFE3. Upon amino acid restimulation, disassembly of the LFC complex liberates the GTPase-activating activity of FLCN, leading to activation of mTORC1 and subsequent inactivation of TFEB and TFE3. Together with FLCN, regulates autophagy: following phosphorylation by ULK1, interacts with GABARAP and promotes autophagy. In addition to its role in mTORC1 signaling, also acts as a co-chaperone of HSP90AA1/Hsp90: inhibits the ATPase activity of HSP90AA1/Hsp90, leading to activate both kinase and non-kinase client proteins of HSP90AA1/Hsp90. Acts as a scaffold to load client protein FLCN onto HSP90AA1/Hsp90. Competes with the activating co-chaperone AHSA1 for binding to HSP90AA1, thereby providing a reciprocal regulatory mechanism for chaperoning of client proteins. May play a role in the signal transduction pathway of apoptosis induced by O6-methylguanine-mispaired lesions. The chain is Folliculin-interacting protein 2 from Mus musculus (Mouse).